The following is a 98-amino-acid chain: uncharacterized protein (98 aa).

The next 2 helical transmembrane spans lie at 13–33 and 65–85; these read LFSL…IAIF and IMVI…IFIS.

It is found in the membrane. This is an uncharacterized protein from Saccharomyces cerevisiae (strain ATCC 204508 / S288c) (Baker's yeast).